Consider the following 545-residue polypeptide: Methionine--tRNA ligase (545 aa).

The 'HIGH' region motif lies at 12–22 (PYANGSLHIGH). Zn(2+) contacts are provided by Cys143, Cys146, Cys156, and Cys159. The 'KMSKS' region motif lies at 329-333 (KLSKS). Lys332 contributes to the ATP binding site.

It belongs to the class-I aminoacyl-tRNA synthetase family. MetG type 1 subfamily. Monomer. The cofactor is Zn(2+).

The protein resides in the cytoplasm. It carries out the reaction tRNA(Met) + L-methionine + ATP = L-methionyl-tRNA(Met) + AMP + diphosphate. In terms of biological role, is required not only for elongation of protein synthesis but also for the initiation of all mRNA translation through initiator tRNA(fMet) aminoacylation. This chain is Methionine--tRNA ligase (metG), found in Buchnera aphidicola subsp. Baizongia pistaciae (strain Bp).